The following is a 166-amino-acid chain: NADH-quinone oxidoreductase subunit A (166 aa).

A run of 3 helical transmembrane segments spans residues 16 to 36, 68 to 88, and 98 to 118; these read FAVF…GAYF, FYLV…LYAW, and IGFI…FYLV. Residues 141-166 form a disordered region; that stretch reads RYASSHPQDISQELSVAGSQQANESR.

Belongs to the complex I subunit 3 family. NDH-1 is composed of 13 different subunits. Subunits NuoA, H, J, K, L, M, N constitute the membrane sector of the complex.

It is found in the cell inner membrane. It carries out the reaction a quinone + NADH + 5 H(+)(in) = a quinol + NAD(+) + 4 H(+)(out). In terms of biological role, NDH-1 shuttles electrons from NADH, via FMN and iron-sulfur (Fe-S) centers, to quinones in the respiratory chain. The immediate electron acceptor for the enzyme in this species is believed to be ubiquinone. Couples the redox reaction to proton translocation (for every two electrons transferred, four hydrogen ions are translocated across the cytoplasmic membrane), and thus conserves the redox energy in a proton gradient. This Yersinia pseudotuberculosis serotype O:1b (strain IP 31758) protein is NADH-quinone oxidoreductase subunit A.